The primary structure comprises 289 residues: Proteasome subunit beta (289 aa).

A propeptide spans M1–G59 (removed in mature form; by autocatalysis). The active-site Nucleophile is the T60.

Belongs to the peptidase T1B family. In terms of assembly, the 20S proteasome core is composed of 14 alpha and 14 beta subunits that assemble into four stacked heptameric rings, resulting in a barrel-shaped structure. The two inner rings, each composed of seven catalytic beta subunits, are sandwiched by two outer rings, each composed of seven alpha subunits. The catalytic chamber with the active sites is on the inside of the barrel. Has a gated structure, the ends of the cylinder being occluded by the N-termini of the alpha-subunits. Is capped by the proteasome-associated ATPase, ARC.

The protein localises to the cytoplasm. The enzyme catalyses Cleavage of peptide bonds with very broad specificity.. It participates in protein degradation; proteasomal Pup-dependent pathway. The formation of the proteasomal ATPase ARC-20S proteasome complex, likely via the docking of the C-termini of ARC into the intersubunit pockets in the alpha-rings, may trigger opening of the gate for substrate entry. Interconversion between the open-gate and close-gate conformations leads to a dynamic regulation of the 20S proteasome proteolysis activity. In terms of biological role, component of the proteasome core, a large protease complex with broad specificity involved in protein degradation. The polypeptide is Proteasome subunit beta (Saccharomonospora viridis (strain ATCC 15386 / DSM 43017 / JCM 3036 / CCUG 5913 / NBRC 12207 / NCIMB 9602 / P101) (Thermoactinomyces viridis)).